The chain runs to 118 residues: Ribosome-binding factor A (118 aa).

The protein belongs to the RbfA family. As to quaternary structure, monomer. Binds 30S ribosomal subunits, but not 50S ribosomal subunits or 70S ribosomes.

Its subcellular location is the cytoplasm. In terms of biological role, one of several proteins that assist in the late maturation steps of the functional core of the 30S ribosomal subunit. Associates with free 30S ribosomal subunits (but not with 30S subunits that are part of 70S ribosomes or polysomes). Required for efficient processing of 16S rRNA. May interact with the 5'-terminal helix region of 16S rRNA. This Geobacter metallireducens (strain ATCC 53774 / DSM 7210 / GS-15) protein is Ribosome-binding factor A.